Here is a 408-residue protein sequence, read N- to C-terminus: Protein SLX4IP (408 aa).

Glycyl lysine isopeptide (Lys-Gly) (interchain with G-Cter in SUMO2) cross-links involve residues lysine 61 and lysine 79. A Phosphoserine modification is found at serine 130. Residues lysine 167 and lysine 176 each participate in a glycyl lysine isopeptide (Lys-Gly) (interchain with G-Cter in SUMO2) cross-link. The disordered stretch occupies residues 173-226; that stretch reads TETKSSVTSKSQTRRDTVETSSDSVIAEIARRRNDGQASSSPPSESMGQAKDSI. Residues 208–219 are compositionally biased toward polar residues; sequence GQASSSPPSESM. Position 213 is a phosphoserine (serine 213). Residues lysine 239 and lysine 242 each participate in a glycyl lysine isopeptide (Lys-Gly) (interchain with G-Cter in SUMO2) cross-link. Residues 243-255 show a composition bias toward polar residues; that stretch reads VNQTQPEDTSGQQ. Positions 243–313 are disordered; that stretch reads VNQTQPEDTS…DFDHHGRVSL (71 aa). Residues lysine 256, lysine 291, lysine 347, lysine 356, and lysine 372 each participate in a glycyl lysine isopeptide (Lys-Gly) (interchain with G-Cter in SUMO2) cross-link. Residues 365–408 are disordered; that stretch reads LSSRHLMKNNPGQAQQTGLATNTERLSTIQNSPTKKRKKYERGH. Residues 374 to 397 are compositionally biased toward polar residues; it reads NPGQAQQTGLATNTERLSTIQNSP. Threonine 392 carries the post-translational modification Phosphothreonine. The segment covering 398–408 has biased composition (basic residues); the sequence is TKKRKKYERGH. Lysine 399 participates in a covalent cross-link: Glycyl lysine isopeptide (Lys-Gly) (interchain with G-Cter in SUMO2).

This sequence belongs to the SLX4IP family. Interacts with SLX4/BTBD12; subunit of different structure-specific endonucleases.

The polypeptide is Protein SLX4IP (SLX4IP) (Homo sapiens (Human)).